The sequence spans 671 residues: Condensin complex subunit 2 (671 aa).

Polar residues predominate over residues 1-24; it reads MDESLTPNPKQKPASTTTRIQAPT. Disordered stretches follow at residues 1 to 33, 404 to 444, and 510 to 564; these read MDESLTPNPKQKPASTTTRIQAPTSPFFLGSND, NSWA…KQAE, and RRKN…ISQP. Residues 406–415 carry the Kleisin-gamma middle domain (GM domain) involved in chromosome-binding motif; that stretch reads WAGPDHWKYR. The segment covering 536-556 has biased composition (acidic residues); sequence VYDDDDGPFDDNENDQSDAED.

Belongs to the CND2 (condensin subunit 2) family. As to quaternary structure, component of the condensin complex. Mostly expressed in flower buds and flowers, and, to a lower extent, in roots, stems, leaves and seedlings.

It is found in the cytoplasm. It localises to the chromosome. Its function is as follows. Regulatory subunit of the condensin complex, a complex required for conversion of interphase chromatin into mitotic-like condense chromosomes. The condensin complex probably introduces positive supercoils into relaxed DNA in the presence of type I topoisomerases and converts nicked DNA into positive knotted forms in the presence of type II topoisomerases. Essential protein. This is Condensin complex subunit 2 (CAPH) from Arabidopsis thaliana (Mouse-ear cress).